Reading from the N-terminus, the 153-residue chain is Cytochrome c-type biogenesis protein CcmE (153 aa).

Residues 1-8 (MATRRGRR) lie on the Cytoplasmic side of the membrane. A helical; Signal-anchor for type II membrane protein membrane pass occupies residues 9–29 (ALLIAGGVGLLALAAALVLNA). Topologically, residues 30 to 153 (LRSNLVFFFS…PSATLQTEAR (124 aa)) are periplasmic. Heme-binding residues include histidine 124 and tyrosine 128.

Belongs to the CcmE/CycJ family.

It is found in the cell inner membrane. In terms of biological role, heme chaperone required for the biogenesis of c-type cytochromes. Transiently binds heme delivered by CcmC and transfers the heme to apo-cytochromes in a process facilitated by CcmF and CcmH. The polypeptide is Cytochrome c-type biogenesis protein CcmE (Bordetella bronchiseptica (strain ATCC BAA-588 / NCTC 13252 / RB50) (Alcaligenes bronchisepticus)).